The primary structure comprises 325 residues: Methionyl-tRNA formyltransferase (325 aa).

113–116 (SLLP) is a binding site for (6S)-5,6,7,8-tetrahydrofolate.

The protein belongs to the Fmt family.

It carries out the reaction L-methionyl-tRNA(fMet) + (6R)-10-formyltetrahydrofolate = N-formyl-L-methionyl-tRNA(fMet) + (6S)-5,6,7,8-tetrahydrofolate + H(+). Attaches a formyl group to the free amino group of methionyl-tRNA(fMet). The formyl group appears to play a dual role in the initiator identity of N-formylmethionyl-tRNA by promoting its recognition by IF2 and preventing the misappropriation of this tRNA by the elongation apparatus. The sequence is that of Methionyl-tRNA formyltransferase from Chromohalobacter salexigens (strain ATCC BAA-138 / DSM 3043 / CIP 106854 / NCIMB 13768 / 1H11).